Reading from the N-terminus, the 449-residue chain is 23S rRNA (uracil(1939)-C(5))-methyltransferase RlmD (449 aa).

One can recognise a TRAM domain in the interval 15-73; sequence KAIPAKNLTVTVTSLDPFGQGVARHEGKTVFVTGVLPGEQAEVQLTEDKRQFSHAKLKR. Residues C86, C92, C95, and C173 each contribute to the [4Fe-4S] cluster site. Q276, F305, N310, E326, N353, and D374 together coordinate S-adenosyl-L-methionine. C400 functions as the Nucleophile in the catalytic mechanism.

The protein belongs to the class I-like SAM-binding methyltransferase superfamily. RNA M5U methyltransferase family. RlmD subfamily.

It carries out the reaction uridine(1939) in 23S rRNA + S-adenosyl-L-methionine = 5-methyluridine(1939) in 23S rRNA + S-adenosyl-L-homocysteine + H(+). Catalyzes the formation of 5-methyl-uridine at position 1939 (m5U1939) in 23S rRNA. This is 23S rRNA (uracil(1939)-C(5))-methyltransferase RlmD from Pectobacterium carotovorum subsp. carotovorum (strain PC1).